The following is a 740-amino-acid chain: Melanoma-associated antigen D4 (740 aa).

The span at 1–11 shows a compositional bias: basic and acidic residues; that stretch reads MAEGSYRKESE. Disordered stretches follow at residues 1 to 27, 139 to 208, 242 to 298, and 321 to 377; these read MAEGSYRKESEGYNVEDMDEGSDEVGE, ATHQ…GPST, PAGV…ALAK, and IPEP…ASQP. The segment covering 14 to 27 has biased composition (acidic residues); that stretch reads NVEDMDEGSDEVGE. Polar residues-rich tracts occupy residues 141–155 and 162–175; these read HQASGGDTQPMTSAA and PETSVASPHSSRML. A compositionally biased stretch (low complexity) spans 185–207; that stretch reads APARSPQPQTSSQAQEAAAEGPS. Positions 321–337 are enriched in low complexity; that stretch reads IPEPESAAATSQQSAEP. Residues 354–363 show a composition bias toward acidic residues; the sequence is DEYESGEEER. The region spanning 414 to 612 is the MAGE domain; the sequence is LQERANKLVK…REWRAHFLEA (199 aa). A disordered region spans residues 697–722; sequence WRAGVSSGTNGAASASMLDGPSTSST.

As to quaternary structure, interacts with TRIM27.

May enhance ubiquitin ligase activity of RING-type zinc finger-containing E3 ubiquitin-protein ligases. Proposed to act through recruitment and/or stabilization of the Ubl-conjugating enzyme (E2) at the E3:substrate complex. In Bos taurus (Bovine), this protein is Melanoma-associated antigen D4 (MAGED4).